Reading from the N-terminus, the 294-residue chain is MKTKIIVIVGPTAVGKTALAIEVAKRFNGEVVSGDSQQVYRGLDIGTAKASPEEQAAVPHHLIDVREITESYSAFDFVSEAKMTIEDIQSRGKLAIIAGGTGLYIQSLLEGYHLGGETPYEEILAYRASLEPYSDEELAHLVEQAGLEIPQFNRRRAMRALEIAHFGQDLENQEILYEPLIICLDDERSQLYERINHRVDLMFEAGLLDEAKWLFDHSPNVQAAKGIGYKELFPYFRGEQTFEEARESLKQATRRFAKRQLTWFRNRMQVTFYQIGESGVQDRILSQIEEFLDD.

10-17 serves as a coordination point for ATP; that stretch reads GPTAVGKT. Substrate is bound at residue 12-17; the sequence is TAVGKT. Positions 35–38 are interaction with substrate tRNA; sequence DSQQ.

This sequence belongs to the IPP transferase family. As to quaternary structure, monomer. Requires Mg(2+) as cofactor.

It carries out the reaction adenosine(37) in tRNA + dimethylallyl diphosphate = N(6)-dimethylallyladenosine(37) in tRNA + diphosphate. Catalyzes the transfer of a dimethylallyl group onto the adenine at position 37 in tRNAs that read codons beginning with uridine, leading to the formation of N6-(dimethylallyl)adenosine (i(6)A). This is tRNA dimethylallyltransferase from Streptococcus pneumoniae (strain Hungary19A-6).